We begin with the raw amino-acid sequence, 689 residues long: DNA ligase (689 aa).

NAD(+) is bound by residues 40–44, 89–90, and E121; these read DSEYD and SL. Catalysis depends on K123, which acts as the N6-AMP-lysine intermediate. 4 residues coordinate NAD(+): R144, E179, K295, and K319. Zn(2+) contacts are provided by C413, C416, C431, and C437. Residues 610 to 689 enclose the BRCT domain; that stretch reads REQSSLTDKI…EEWLTLIKNV (80 aa).

This sequence belongs to the NAD-dependent DNA ligase family. LigA subfamily. Requires Mg(2+) as cofactor. Mn(2+) is required as a cofactor.

The catalysed reaction is NAD(+) + (deoxyribonucleotide)n-3'-hydroxyl + 5'-phospho-(deoxyribonucleotide)m = (deoxyribonucleotide)n+m + AMP + beta-nicotinamide D-nucleotide.. DNA ligase that catalyzes the formation of phosphodiester linkages between 5'-phosphoryl and 3'-hydroxyl groups in double-stranded DNA using NAD as a coenzyme and as the energy source for the reaction. It is essential for DNA replication and repair of damaged DNA. The chain is DNA ligase from Rickettsia rickettsii (strain Iowa).